The following is a 482-amino-acid chain: Cis-aconitate decarboxylase-like protein oryM (482 aa).

This sequence belongs to the PrpD family.

It functions in the pathway secondary metabolite biosynthesis. Its function is as follows. Cis-aconitate decarboxylase-like protein; part of the gene cluster that mediates the biosynthesis of oryzines, natural products with an unusual maleidride backbone. The two subunits of the fungal fatty acid synthase oryfasA and oryfasB probably form octenoic acid. This fatty acid is most likely activated by the acyl-CoA ligase oryP to give octenyl-CoA before the citrate synthase-like protein oryE catalyzes condensation with oxaloacetate to form tricarboxylic acid. The next steps of the pathways are conjectural, but a favorite possible route has been proposed, beginning with decarboxylation and concomitant dehydration by the decarboxylase oryM, followed by tautomerization, which may lead to the production of a diene intermediate. Reduction of this diene intermediate could give the known metabolite piliformic acid. On the pathway to oryzine B and oryzine A, however, hydroxylation of the diene by the alpha-ketoglutarate-dependent dioxygenase oryG and lactonisation by the lactonohydrolases oryH or oryL could give oryzine B directly. Finally, enoyl reduction by the dehydrogenase oryD would then convert oryzine B into oryzine A. This Aspergillus oryzae (strain ATCC 42149 / RIB 40) (Yellow koji mold) protein is Cis-aconitate decarboxylase-like protein oryM.